The following is a 557-amino-acid chain: MSSTHPLKDQLALLIEAALEALAPDAPVSLEIERPKNPTHGDFSSNAAMQLARPLKRNPRELAQLIVTELPASTLVAKADIAGAGFINFHLTPAAWHGIVRQVRTAGAQFGRAQRETPQRVLIEFVSANPTGPLHVGHGRQAALGDALCNLYAAQGWDVYREFYYNDAGVQIATLAASVQARARGLQPGDATWPEAAYNGDYIADIARDFLAGKTVKSDDREFTASGDVDDLDSIRQFAVAYLRHEQDLDLRAFAVHFDNYYLESSLYTDGRVDATVQRLVAAGKTYEQDGALWLRTTEYGDDKDRVMKKSDGTYTYFVPDVAYHIAKWERGFARAINIQGTDHHGTIARVRAGLQAASVGIPEGYPDYLLHTMVRVMRGGEEVKISKRAGSYVTLRDLIEWTSKDAVRFFLLSRKADTEYVFDIDLALARNNDNPVYYVQYAHARICRVFEEWSGDVATLADADLAPLEAAHELALMQRLAEYPETVASAARDLAPHLLVHYLQMLAGDFHAWYNAEKFLVADEATKRARLALADATRIVIVNGLALLGVDAPEKM.

A 'HIGH' region motif is present at residues 128-138; the sequence is ANPTGPLHVGH.

Belongs to the class-I aminoacyl-tRNA synthetase family. Monomer.

The protein resides in the cytoplasm. The enzyme catalyses tRNA(Arg) + L-arginine + ATP = L-arginyl-tRNA(Arg) + AMP + diphosphate. The protein is Arginine--tRNA ligase of Thiobacillus denitrificans (strain ATCC 25259 / T1).